The following is a 134-amino-acid chain: Outer membrane lipoprotein RcsF (134 aa).

A signal peptide spans 1–15; that stretch reads MRALPICLVALMLSG. A lipid anchor (N-palmitoyl cysteine) is attached at C16. C16 is lipidated: S-diacylglycerol cysteine. Disordered stretches follow at residues 22–48 and 67–88; these read SPVE…RATP and GEVS…IPTA. The span at 72-82 shows a compositional bias: polar residues; sequence DSCQASNQDSP. Intrachain disulfides connect C74–C118 and C109–C124.

The protein belongs to the RcsF family.

The protein localises to the cell outer membrane. Essential component of the Rcs signaling system, which controls transcription of numerous genes. Plays a role in signal transduction from the cell surface to the histidine kinase RcsC. May detect outer membrane defects. In Escherichia coli O6:H1 (strain CFT073 / ATCC 700928 / UPEC), this protein is Outer membrane lipoprotein RcsF.